Consider the following 435-residue polypeptide: Serine/threonine-protein kinase ssn3 (435 aa).

The region spanning 49 to 377 is the Protein kinase domain; that stretch reads YRIVGFISSG…AREALEHPYF (329 aa). Residues 55-63 and K79 each bind ATP; that span reads ISSGTYGRV. D181 functions as the Proton acceptor in the catalytic mechanism. A compositionally biased stretch (basic and acidic residues) spans 398–407; it reads RRVTQDDNDI. Residues 398–435 form a disordered region; it reads RRVTQDDNDIRSGSLPGTKRSGLPDDSLMGRASKRIKE.

It belongs to the protein kinase superfamily. CMGC Ser/Thr protein kinase family. CDC2/CDKX subfamily. In terms of assembly, component of the srb8-11 complex, a regulatory module of the Mediator complex. Mg(2+) serves as cofactor.

Its subcellular location is the nucleus. The catalysed reaction is L-seryl-[protein] + ATP = O-phospho-L-seryl-[protein] + ADP + H(+). It catalyses the reaction L-threonyl-[protein] + ATP = O-phospho-L-threonyl-[protein] + ADP + H(+). The enzyme catalyses [DNA-directed RNA polymerase] + ATP = phospho-[DNA-directed RNA polymerase] + ADP + H(+). In terms of biological role, component of the srb8-11 complex. The srb8-11 complex is a regulatory module of the Mediator complex which is itself involved in regulation of basal and activated RNA polymerase II-dependent transcription. The srb8-11 complex may be involved in the transcriptional repression of a subset of genes regulated by Mediator. It may inhibit the association of the Mediator complex with RNA polymerase II to form the holoenzyme complex. The srb8-11 complex phosphorylates the C-terminal domain (CTD) of the largest subunit of RNA polymerase II. The sequence is that of Serine/threonine-protein kinase ssn3 (ssn3) from Aspergillus terreus (strain NIH 2624 / FGSC A1156).